A 491-amino-acid polypeptide reads, in one-letter code: Glycogen synthase 2 (491 aa).

Lysine 16 is an ADP-alpha-D-glucose binding site.

This sequence belongs to the glycosyltransferase 1 family. Bacterial/plant glycogen synthase subfamily.

The catalysed reaction is [(1-&gt;4)-alpha-D-glucosyl](n) + ADP-alpha-D-glucose = [(1-&gt;4)-alpha-D-glucosyl](n+1) + ADP + H(+). It participates in glycan biosynthesis; glycogen biosynthesis. Synthesizes alpha-1,4-glucan chains using ADP-glucose. The sequence is that of Glycogen synthase 2 from Nitrosococcus oceani (strain ATCC 19707 / BCRC 17464 / JCM 30415 / NCIMB 11848 / C-107).